We begin with the raw amino-acid sequence, 141 residues long: Large-conductance mechanosensitive channel (141 aa).

Helical transmembrane passes span 14–34 (VVDLAVGVIIGAAFGAIVNSL), 38–58 (VIMPIIGAVTGGLDFSNYYIP), and 82–102 (GQFLTLAVNFTIIAFVLFMVI).

The protein belongs to the MscL family. In terms of assembly, homopentamer.

It localises to the cell inner membrane. Channel that opens in response to stretch forces in the membrane lipid bilayer. May participate in the regulation of osmotic pressure changes within the cell. In Methylorubrum extorquens (strain CM4 / NCIMB 13688) (Methylobacterium extorquens), this protein is Large-conductance mechanosensitive channel.